Here is a 444-residue protein sequence, read N- to C-terminus: Putative permease IIC component YwbA (444 aa).

The PTS EIIC type-3 domain maps to 8 to 421; sequence MEEKIMPVAG…LITCAIYYPF (414 aa). A run of 10 helical transmembrane segments spans residues 31-51, 72-92, 104-124, 138-158, 187-207, 223-243, 246-266, 291-311, 349-371, and 402-422; these read GIIL…LTSL, LGYP…FGIA, LSAG…EVPF, GIPI…IALF, FVAL…RLLI, LGTP…AEFV, LLWS…APIW, FFQI…VLTM, PLLI…IGMS, and SGAV…YPFF.

It localises to the cell membrane. In terms of biological role, the phosphoenolpyruvate-dependent sugar phosphotransferase system (PTS), a major carbohydrate active -transport system, catalyzes the phosphorylation of incoming sugar substrates concomitant with their translocation across the cell membrane. This chain is Putative permease IIC component YwbA (ywbA), found in Bacillus subtilis (strain 168).